Here is a 104-residue protein sequence, read N- to C-terminus: Pyrimidine/purine nucleoside phosphorylase (104 aa).

The protein belongs to the nucleoside phosphorylase PpnP family.

It carries out the reaction a purine D-ribonucleoside + phosphate = a purine nucleobase + alpha-D-ribose 1-phosphate. It catalyses the reaction adenosine + phosphate = alpha-D-ribose 1-phosphate + adenine. The enzyme catalyses cytidine + phosphate = cytosine + alpha-D-ribose 1-phosphate. The catalysed reaction is guanosine + phosphate = alpha-D-ribose 1-phosphate + guanine. It carries out the reaction inosine + phosphate = alpha-D-ribose 1-phosphate + hypoxanthine. It catalyses the reaction thymidine + phosphate = 2-deoxy-alpha-D-ribose 1-phosphate + thymine. The enzyme catalyses uridine + phosphate = alpha-D-ribose 1-phosphate + uracil. The catalysed reaction is xanthosine + phosphate = alpha-D-ribose 1-phosphate + xanthine. In terms of biological role, catalyzes the phosphorolysis of diverse nucleosides, yielding D-ribose 1-phosphate and the respective free bases. Can use uridine, adenosine, guanosine, cytidine, thymidine, inosine and xanthosine as substrates. Also catalyzes the reverse reactions. This chain is Pyrimidine/purine nucleoside phosphorylase, found in Pelobacter propionicus (strain DSM 2379 / NBRC 103807 / OttBd1).